Reading from the N-terminus, the 1692-residue chain is Regulating synaptic membrane exocytosis protein 1 (1692 aa).

The segment at 1-26 (MSSAVGPRGPRPPTVPPPMQELPDLS) is disordered. The segment covering 9–20 (GPRPPTVPPPMQ) has biased composition (pro residues). Residues 22-182 (LPDLSHLTEE…TKSGAWFFGS (161 aa)) form the RabBD domain. An FYVE-type zinc finger spans residues 110–170 (KDDAPTCGIC…VCNLCRKQQE (61 aa)). Zn(2+)-binding residues include C116, C119, C132, C135, C140, C143, C162, and C165. Residues 183-199 (GPQQTSQDGTLSDTATG) are compositionally biased toward polar residues. The interval 183-555 (GPQQTSQDGT…CEDVELESES (373 aa)) is disordered. The segment covering 204–217 (VPREKKARLQERSR) has biased composition (basic and acidic residues). Over residues 223–234 (STAAASSQDAAP) the composition is skewed to low complexity. A compositionally biased stretch (basic and acidic residues) spans 305–357 (VEERERKERRESRRLEKGRSQDYPDTPEKRDEGKAADEEKQRKEEDYQTRYRS). Over residues 377–388 (MHARVSRARHER) the composition is skewed to basic residues. Residues 412-430 (RAPAAARASPPDSPRAYSA) are compositionally biased toward low complexity. Over residues 462–475 (PELKAQEPLRKQSR) the composition is skewed to basic and acidic residues. Residues 497-509 (RNDSLSSDQSESV) show a composition bias toward polar residues. At S500 the chain carries Phosphoserine. A compositionally biased stretch (basic residues) spans 515–527 (KPHRSKRGGKKRQ). A compositionally biased stretch (acidic residues) spans 545 to 555 (SCEDVELESES). Position 578 is a phosphoserine (S578). Residues 605-691 (RTTMPKDSGA…EPQVEIIVSR (87 aa)) enclose the PDZ domain. Residues 698–732 (RIPESSHPPLESSSSSFESQKMERPSISVISPTSP) form a disordered region. A compositionally biased stretch (low complexity) spans 700–716 (PESSHPPLESSSSSFES). Phosphoserine occurs at positions 728 and 731. The C2 1 domain occupies 742–865 (LPGQLSVKLW…ALLDDEPHWY (124 aa)). Positions 870 to 1013 (HDESSLPLPQ…RTRDVDSQYL (144 aa)) are disordered. S881 carries the phosphoserine modification. The segment covering 935 to 944 (STTLTVPEQQ) has biased composition (polar residues). S977 is subject to Phosphoserine. Residues 992-1009 (RHHDASRSPVDHRTRDVD) show a composition bias toward basic and acidic residues. The residue at position 1031 (S1031) is a Phosphoserine. Disordered stretches follow at residues 1118–1222 (NCLR…EHSS) and 1235–1278 (GGSA…PVRS). Composition is skewed to basic and acidic residues over residues 1128 to 1144 (SPERERGRWSPSLDRRR) and 1157 to 1170 (PENDRHSRKSERSS). S1252 is subject to Phosphoserine. Residues 1252 to 1265 (SPTQSPPADTSFSS) are compositionally biased toward polar residues. T1254 carries the post-translational modification Phosphothreonine. 7 positions are modified to phosphoserine: S1256, S1308, S1310, S1311, S1339, S1340, and S1342. Disordered stretches follow at residues 1332-1394 (CDNV…SGRS), 1408-1428 (LEHNDGSQSDTAVGTVGAGGK), and 1445-1495 (RSRS…GSIN). A compositionally biased stretch (low complexity) spans 1345 to 1366 (SDVSAISRTSSASRLSSTSFMS). Residue S1416 is modified to Phosphoserine. The segment covering 1477-1490 (EMRKMVRQPSREST) has biased composition (basic and acidic residues). The C2 2 domain maps to 1538–1656 (AMGDIQIGME…DLSSMVIGWY (119 aa)). S1677, S1680, S1683, and S1692 each carry phosphoserine.

As to quaternary structure, binds RAB3A, RAB3B and RAB3D that have been activated by GTP-binding. Interacts with RAB3C, RAB10, RAB26 and RAB37. Binds UNC13A. Interacts with TSPOAP1 and RIMBP2. Interacts with PPFIA3 and PPFIA4. Interacts with ERC1. Binds SNAP25, SYT1 and CACNA1B. Interaction with SYT1 is enhanced by calcium ions. Interaction with SNAP25 is weaker in the presence of calcium ions. Phosphorylated by BRSK1. As to expression, expressed in melanocytes. Detected in brain and retina.

Its subcellular location is the cell membrane. The protein localises to the synapse. It localises to the presynaptic cell membrane. Rab effector involved in exocytosis. May act as scaffold protein that regulates neurotransmitter release at the active zone. Essential for maintaining normal probability of neurotransmitter release and for regulating release during short-term synaptic plasticity. Plays a role in dendrite formation by melanocytes. This is Regulating synaptic membrane exocytosis protein 1 (RIMS1) from Homo sapiens (Human).